A 280-amino-acid polypeptide reads, in one-letter code: 4-diphosphocytidyl-2-C-methyl-D-erythritol kinase (280 aa).

K8 is an active-site residue. 91 to 101 (PVAAGLAGGSA) provides a ligand contact to ATP. Residue D133 is part of the active site.

This sequence belongs to the GHMP kinase family. IspE subfamily.

It catalyses the reaction 4-CDP-2-C-methyl-D-erythritol + ATP = 4-CDP-2-C-methyl-D-erythritol 2-phosphate + ADP + H(+). Its pathway is isoprenoid biosynthesis; isopentenyl diphosphate biosynthesis via DXP pathway; isopentenyl diphosphate from 1-deoxy-D-xylulose 5-phosphate: step 3/6. Its function is as follows. Catalyzes the phosphorylation of the position 2 hydroxy group of 4-diphosphocytidyl-2C-methyl-D-erythritol. This is 4-diphosphocytidyl-2-C-methyl-D-erythritol kinase from Clostridium acetobutylicum (strain ATCC 824 / DSM 792 / JCM 1419 / IAM 19013 / LMG 5710 / NBRC 13948 / NRRL B-527 / VKM B-1787 / 2291 / W).